Reading from the N-terminus, the 228-residue chain is L-ornithine N5-acetyltransferase NATA1 (228 aa).

The tract at residues 1–21 (MAPPTAAPEPNTVPETSPTGH) is disordered. Residues 77–227 (VFLLEISPSP…DALQAIDKLN (151 aa)) enclose the N-acetyltransferase domain. Residues 153-155 (IFM), 161-166 (RKGFGK), 192-195 (NVNA), and tyrosine 199 each bind acetyl-CoA.

It belongs to the acetyltransferase family.

Acetyltransferase that converts ornithine to N5-acetylornithine, which is likely used in plant defense. This is L-ornithine N5-acetyltransferase NATA1 (NATA1) from Arabidopsis thaliana (Mouse-ear cress).